The following is a 346-amino-acid chain: Phosphate acyltransferase (346 aa).

It belongs to the PlsX family. Homodimer. Probably interacts with PlsY.

It localises to the cytoplasm. The catalysed reaction is a fatty acyl-[ACP] + phosphate = an acyl phosphate + holo-[ACP]. It functions in the pathway lipid metabolism; phospholipid metabolism. In terms of biological role, catalyzes the reversible formation of acyl-phosphate (acyl-PO(4)) from acyl-[acyl-carrier-protein] (acyl-ACP). This enzyme utilizes acyl-ACP as fatty acyl donor, but not acyl-CoA. The protein is Phosphate acyltransferase of Pelobacter propionicus (strain DSM 2379 / NBRC 103807 / OttBd1).